Consider the following 145-residue polypeptide: 3-hydroxyacyl-[acyl-carrier-protein] dehydratase FabZ (145 aa).

Residue His51 is part of the active site.

It belongs to the thioester dehydratase family. FabZ subfamily.

It is found in the cytoplasm. The enzyme catalyses a (3R)-hydroxyacyl-[ACP] = a (2E)-enoyl-[ACP] + H2O. In terms of biological role, involved in unsaturated fatty acids biosynthesis. Catalyzes the dehydration of short chain beta-hydroxyacyl-ACPs and long chain saturated and unsaturated beta-hydroxyacyl-ACPs. The chain is 3-hydroxyacyl-[acyl-carrier-protein] dehydratase FabZ from Staphylococcus epidermidis (strain ATCC 35984 / DSM 28319 / BCRC 17069 / CCUG 31568 / BM 3577 / RP62A).